Consider the following 236-residue polypeptide: Purine nucleoside phosphorylase DeoD-type (236 aa).

A purine D-ribonucleoside is bound at residue H5. Phosphate contacts are provided by residues G21, R25, R44, and 88 to 91 (RVGT). A purine D-ribonucleoside is bound by residues 180 to 182 (EME) and 204 to 205 (SD). D205 serves as the catalytic Proton donor.

It belongs to the PNP/UDP phosphorylase family. In terms of assembly, homohexamer; trimer of homodimers.

The catalysed reaction is a purine D-ribonucleoside + phosphate = a purine nucleobase + alpha-D-ribose 1-phosphate. The enzyme catalyses a purine 2'-deoxy-D-ribonucleoside + phosphate = a purine nucleobase + 2-deoxy-alpha-D-ribose 1-phosphate. Its function is as follows. Catalyzes the reversible phosphorolytic breakdown of the N-glycosidic bond in the beta-(deoxy)ribonucleoside molecules, with the formation of the corresponding free purine bases and pentose-1-phosphate. The chain is Purine nucleoside phosphorylase DeoD-type from Shewanella amazonensis (strain ATCC BAA-1098 / SB2B).